The sequence spans 432 residues: Glutamate-1-semialdehyde 2,1-aminomutase (432 aa).

Position 272 is an N6-(pyridoxal phosphate)lysine (Lys-272).

This sequence belongs to the class-III pyridoxal-phosphate-dependent aminotransferase family. HemL subfamily. Homodimer. Pyridoxal 5'-phosphate is required as a cofactor.

Its subcellular location is the cytoplasm. The enzyme catalyses (S)-4-amino-5-oxopentanoate = 5-aminolevulinate. The protein operates within porphyrin-containing compound metabolism; protoporphyrin-IX biosynthesis; 5-aminolevulinate from L-glutamyl-tRNA(Glu): step 2/2. Its pathway is porphyrin-containing compound metabolism; chlorophyll biosynthesis. This is Glutamate-1-semialdehyde 2,1-aminomutase from Nostoc sp. (strain PCC 7120 / SAG 25.82 / UTEX 2576).